The following is a 249-amino-acid chain: Domoic acid biosynthesis cluster protein B (249 aa).

In terms of biological role, unknown function: part of the gene cluster that mediates the biosynthesis of domoic acid (DA) and derivatives, natural products with neurochemical activity acting as ionotropic glutamate receptor (iGluR) agonists, thus being neurotoxins causing amnesic shellfish poisoning (ASP). This chain is Domoic acid biosynthesis cluster protein B, found in Pseudo-nitzschia multiseries (Marine planktonic diatom).